The primary structure comprises 438 residues: Glucose-6-phosphate isomerase (438 aa).

Glu289 (proton donor) is an active-site residue. Residues His310 and Lys424 contribute to the active site.

It belongs to the GPI family.

The protein resides in the cytoplasm. The enzyme catalyses alpha-D-glucose 6-phosphate = beta-D-fructose 6-phosphate. It functions in the pathway carbohydrate biosynthesis; gluconeogenesis. Its pathway is carbohydrate degradation; glycolysis; D-glyceraldehyde 3-phosphate and glycerone phosphate from D-glucose: step 2/4. Functionally, catalyzes the reversible isomerization of glucose-6-phosphate to fructose-6-phosphate. This is Glucose-6-phosphate isomerase from Oenococcus oeni (strain ATCC BAA-331 / PSU-1).